The chain runs to 172 residues: EPIDERMAL PATTERNING FACTOR-like protein 7 (172 aa).

Positions 1–27 are cleaved as a signal peptide; sequence MDHVNPTLFHLKSLSIFTLTLLYISSP. Intrachain disulfides connect cysteine 128/cysteine 159, cysteine 132/cysteine 138, cysteine 135/cysteine 161, and cysteine 147/cysteine 153.

The protein belongs to the plant cysteine rich small secretory peptide family. Epidermal patterning factor subfamily.

Its subcellular location is the secreted. In terms of biological role, controls stomatal patterning. This is EPIDERMAL PATTERNING FACTOR-like protein 7 from Arabidopsis thaliana (Mouse-ear cress).